The primary structure comprises 1019 residues: Collagen alpha-2(VI) chain (1019 aa).

Residues 1–20 (MLQGTCSVLLLWGILGAIQA) form the signal peptide. The nonhelical region stretch occupies residues 21-256 (QQQEVISPDT…YKVSCLEIPG (236 aa)). The VWFA 1 domain occupies 46 to 234 (HVYFVLDTSE…EIDQDTINRI (189 aa)). An N-linked (GlcNAc...) asparagine glycan is attached at N140. The interval 257–588 (PSGPKGYRGQ…GEPGPPGDPG (332 aa)) is disordered. The segment at 257-590 (PSGPKGYRGQ…PGPPGDPGLT (334 aa)) is triple-helical region. Residues 287–305 (DPGIEGPIGFPGPKGVPGF) show a composition bias toward low complexity. Basic and acidic residues predominate over residues 306 to 318 (KGEKGEFGADGRK). Residue N327 is glycosylated (N-linked (GlcNAc...) asparagine). 2 stretches are compositionally biased toward basic and acidic residues: residues 365–377 (ERGD…DPGR) and 419–429 (PKGEPGRRGDP). Short sequence motifs (cell attachment site) lie at residues 366–368 (RGD), 426–428 (RGD), 489–491 (RGD), 498–500 (RGD), and 539–541 (RGD). The segment covering 524 to 557 (PGEKGEPGPRGPEGGRGDFGLKGEPGRKGEKGEP) has biased composition (basic and acidic residues). A compositionally biased stretch (pro residues) spans 559–569 (DPGPPGEPGPR). The interval 591-1019 (ECDVMTYVRE…FFDRFIRWIC (429 aa)) is nonhelical region. VWFA domains lie at 615–805 (DVVF…EDVL) and 833–1014 (DIVF…FDRF). A glycan (N-linked (GlcNAc...) asparagine) is linked at N630. Position 701 is a phosphothreonine (T701). S705 bears the Phosphoserine mark. 3 N-linked (GlcNAc...) asparagine glycosylation sites follow: N785, N897, and N954.

This sequence belongs to the type VI collagen family. Trimers composed of three different chains: alpha-1(VI), alpha-2(VI), and alpha-3(VI) or alpha-5(VI) or alpha-6(VI). Interacts with CSPG4. In terms of processing, prolines at the third position of the tripeptide repeating unit (G-X-Y) are hydroxylated in some or all of the chains.

The protein localises to the secreted. It is found in the extracellular space. The protein resides in the extracellular matrix. It localises to the membrane. Collagen VI acts as a cell-binding protein. The protein is Collagen alpha-2(VI) chain (COL6A2) of Homo sapiens (Human).